The chain runs to 456 residues: Outer membrane protein assembly factor BamB (456 aa).

A signal peptide spans 1-19 (MKKLLFITAPLLLSVLTAS). C20 carries N-palmitoyl cysteine lipidation. C20 carries the S-diacylglycerol cysteine lipid modification.

This sequence belongs to the BamB family. Part of the Bam complex.

The protein localises to the cell outer membrane. Part of the outer membrane protein assembly complex, which is involved in assembly and insertion of beta-barrel proteins into the outer membrane. The polypeptide is Outer membrane protein assembly factor BamB (Francisella tularensis subsp. tularensis (strain SCHU S4 / Schu 4)).